The primary structure comprises 591 residues: Probable translation initiation factor IF-2 (591 aa).

The tr-type G domain occupies 6–220; that stretch reads IRTPIVCVMG…IMIGLAQRYM (215 aa). The interval 15–22 is G1; it reads GHVDHGKT. 15-22 lines the GTP pocket; it reads GHVDHGKT. Residues 40–44 form a G2 region; it reads AITQH. The segment at 76 to 79 is G3; sequence DTPG. Residues 76-80 and 130-133 each bind GTP; these read DTPGH and TKVD. The interval 130-133 is G4; sequence TKVD. Residues 198-200 form a G5 region; sequence SAH.

Belongs to the TRAFAC class translation factor GTPase superfamily. Classic translation factor GTPase family. IF-2 subfamily.

Function in general translation initiation by promoting the binding of the formylmethionine-tRNA to ribosomes. Seems to function along with eIF-2. In Methanoregula boonei (strain DSM 21154 / JCM 14090 / 6A8), this protein is Probable translation initiation factor IF-2.